We begin with the raw amino-acid sequence, 864 residues long: Disintegrin and metalloproteinase domain-containing protein 15 (864 aa).

The first 17 residues, 1–17 (MRLALLWALGLLGAGSP), serve as a signal peptide directing secretion. Residues 17–49 (PRPSPPLPNIGGTEEEQQASPERTQSRSLENQV) form a disordered region. A propeptide spanning residues 18-208 (RPSPPLPNIG…EQHHLRRLKR (191 aa)) is cleaved from the precursor. A compositionally biased stretch (polar residues) spans 34–49 (QASPERTQSRSLENQV). Residue Asn-57 is glycosylated (N-linked (GlcNAc...) asparagine). A Cysteine switch motif is present at residues 178–185 (HTCAPSWH). A Zn(2+)-binding site is contributed by Cys-180. Over 209–698 (DVVTETKIVE…QLRATSSLTT (490 aa)) the chain is Extracellular. Residues 215-416 (KIVELVIVAD…GMGSCLFEWP (202 aa)) enclose the Peptidase M12B domain. Residue Asn-239 is glycosylated (N-linked (GlcNAc...) asparagine). 4 disulfides stabilise this stretch: Cys-325–Cys-411, Cys-367–Cys-395, Cys-369–Cys-378, and Cys-482–Cys-502. His-350 contacts Zn(2+). The active site involves Glu-351. His-354 and His-360 together coordinate Zn(2+). N-linked (GlcNAc...) asparagine glycans are attached at residues Asn-391 and Asn-394. A Disintegrin domain is found at 423 to 510 (SSLCGNMFVD…QCPPDIRLGD (88 aa)). 2 N-linked (GlcNAc...) asparagine glycosylation sites follow: Asn-608 and Asn-613. 3 disulfides stabilise this stretch: Cys-659/Cys-669, Cys-663/Cys-675, and Cys-677/Cys-686. The 29-residue stretch at 659-687 (CRSKCHGHGVCDSSRHCHCDEGWAPPDCM) folds into the EGF-like domain. The helical transmembrane segment at 699–719 (GLLLSLLLLLVLVLLGASYWY) threads the bilayer. 2 positions are modified to phosphotyrosine; by HCK and LCK: Tyr-717 and Tyr-737. Topologically, residues 720–864 (RARLHQRLCQ…PPPAASSLYL (145 aa)) are cytoplasmic. Residues 738–864 (RAAQSGPPER…PPPAASSLYL (127 aa)) form a disordered region. Polar residues predominate over residues 753-765 (RAQQMPGTKQANV). 2 stretches are compositionally biased toward pro residues: residues 768–780 (PVPP…PNPV) and 810–825 (PQGP…PLPA). Residues 816 to 822 (PPPPRKP) carry the SH3-binding motif. A compositionally biased stretch (low complexity) spans 826–850 (NPQGRPPLGDLPGPGDGSLQLVVPS). The SH3-binding signature appears at 851-857 (RPAPPPP).

In terms of assembly, interacts with ITAGV-ITGB3 (vitronectin receptor). Interacts with SH3GL2 and SNX9; this interaction occurs preferentially with ADAM15 precursor, rather than the processed form, suggesting it occurs in a secretory pathway compartment prior to the medial Golgi. Interacts with ITAG9-ITGB1. Interacts specifically with Src family protein-tyrosine kinases (PTKs). Interacts with SH3PXD2A. Interacts with ITAGV-ITGB1. Interacts with GRB2, HCK, ITSN1, ITSN2, LYN, MAPK1, MAPK3, NCF1, NCK1, nephrocystin, PTK6, SNX33, LCK and SRC. Zn(2+) is required as a cofactor. The precursor is cleaved by a furin endopeptidase. Post-translationally, phosphorylation increases association with PTKs. As to expression, predominantly expressed in brain, spinal cord, sciatic nerve and lung. Expressed at lower levels in all other tissues. In the peripheral nervous system, expressed predominantly by Schwann cells. In the central nervous system, preferentially expressed by neuronal cells.

It is found in the endomembrane system. Its subcellular location is the cell junction. The protein localises to the adherens junction. The protein resides in the cell projection. It localises to the cilium. It is found in the flagellum. Its subcellular location is the cytoplasmic vesicle. The protein localises to the secretory vesicle. The protein resides in the acrosome. Functionally, active metalloproteinase with gelatinolytic and collagenolytic activity. Plays a role in the wound healing process. Mediates both heterotypic intraepithelial cell/T-cell interactions and homotypic T-cell aggregation. Inhibits beta-1 integrin-mediated cell adhesion and migration of airway smooth muscle cells. Suppresses cell motility on or towards fibronectin possibly by driving alpha-v/beta-1 integrin (ITAGV-ITGB1) cell surface expression via ERK1/2 inactivation. Cleaves E-cadherin in response to growth factor deprivation. Plays a role in glomerular cell migration. Plays a role in pathological neovascularization. May play a role in cartilage remodeling. May be proteolytically processed, during sperm epididymal maturation and the acrosome reaction. May play a role in sperm-egg binding through its disintegrin domain. This Rattus norvegicus (Rat) protein is Disintegrin and metalloproteinase domain-containing protein 15 (Adam15).